Here is a 165-residue protein sequence, read N- to C-terminus: 6,7-dimethyl-8-ribityllumazine synthase (165 aa).

5-amino-6-(D-ribitylamino)uracil-binding positions include W26, 58 to 60 (SIE), and 80 to 82 (VVI). 85–86 (GT) contributes to the (2S)-2-hydroxy-3-oxobutyl phosphate binding site. Residue H88 is the Proton donor of the active site. N113 lines the 5-amino-6-(D-ribitylamino)uracil pocket. R127 provides a ligand contact to (2S)-2-hydroxy-3-oxobutyl phosphate.

Belongs to the DMRL synthase family.

It catalyses the reaction (2S)-2-hydroxy-3-oxobutyl phosphate + 5-amino-6-(D-ribitylamino)uracil = 6,7-dimethyl-8-(1-D-ribityl)lumazine + phosphate + 2 H2O + H(+). It participates in cofactor biosynthesis; riboflavin biosynthesis; riboflavin from 2-hydroxy-3-oxobutyl phosphate and 5-amino-6-(D-ribitylamino)uracil: step 1/2. Catalyzes the formation of 6,7-dimethyl-8-ribityllumazine by condensation of 5-amino-6-(D-ribitylamino)uracil with 3,4-dihydroxy-2-butanone 4-phosphate. This is the penultimate step in the biosynthesis of riboflavin. This Saccharopolyspora erythraea (strain ATCC 11635 / DSM 40517 / JCM 4748 / NBRC 13426 / NCIMB 8594 / NRRL 2338) protein is 6,7-dimethyl-8-ribityllumazine synthase.